A 225-amino-acid polypeptide reads, in one-letter code: Glycerol-3-phosphate acyltransferase (225 aa).

A run of 6 helical transmembrane segments spans residues 6 to 26 (FFFFFLLFYALGSFPTGLIIG), 55 to 75 (WGIVVFLFDFAKGLVPAIICL), 95 to 115 (DIAICLLVILPIFGHMFSIFN), 135 to 155 (PFIGLLGILFFVLLFIFVGYA), 160 to 180 (IMATLLVDLLLFFINHHPGIT), and 187 to 207 (ILYFFIGLSTCFIILKHHSNI).

The protein belongs to the PlsY family. As to quaternary structure, probably interacts with PlsX.

Its subcellular location is the cell membrane. It carries out the reaction an acyl phosphate + sn-glycerol 3-phosphate = a 1-acyl-sn-glycero-3-phosphate + phosphate. Its pathway is lipid metabolism; phospholipid metabolism. Catalyzes the transfer of an acyl group from acyl-phosphate (acyl-PO(4)) to glycerol-3-phosphate (G3P) to form lysophosphatidic acid (LPA). This enzyme utilizes acyl-phosphate as fatty acyl donor, but not acyl-CoA or acyl-ACP. The polypeptide is Glycerol-3-phosphate acyltransferase (Phytoplasma australiense).